A 522-amino-acid chain; its full sequence is 56 kDa type-specific antigen (522 aa).

The first 22 residues, 1-22 (MKKIMLIASAMSALSLPFSASA), serve as a signal peptide directing secretion. A helical transmembrane segment spans residues 67 to 87 (LTTMLPFGGTLAAGMTIAPGF). A disordered region spans residues 385-417 (AQEEGDDQSQVSCNDKKQQAVAEDSKAGSSKEG). Over residues 398-417 (NDKKQQAVAEDSKAGSSKEG) the composition is skewed to basic and acidic residues. Residues 470-490 (IGVVASGVLGVAINVADGVCV) traverse the membrane as a helical segment.

The protein localises to the cell membrane. In terms of biological role, may be an adherent factor for rickettsial adsorption to the host-cell surface and a determinant of virulence of individual rickettsial strain. It is the major outer membrane protein. The protein is 56 kDa type-specific antigen of Orientia tsutsugamushi (Rickettsia tsutsugamushi).